The chain runs to 708 residues: Ribosomal RNA large subunit methyltransferase K/L (708 aa).

Positions 43–154 (QGYQITLWTR…RGKITIGINF (112 aa)) constitute a THUMP domain.

Belongs to the methyltransferase superfamily. RlmKL family.

The protein resides in the cytoplasm. The enzyme catalyses guanosine(2445) in 23S rRNA + S-adenosyl-L-methionine = N(2)-methylguanosine(2445) in 23S rRNA + S-adenosyl-L-homocysteine + H(+). The catalysed reaction is guanosine(2069) in 23S rRNA + S-adenosyl-L-methionine = N(2)-methylguanosine(2069) in 23S rRNA + S-adenosyl-L-homocysteine + H(+). Specifically methylates the guanine in position 2445 (m2G2445) and the guanine in position 2069 (m7G2069) of 23S rRNA. This Shewanella amazonensis (strain ATCC BAA-1098 / SB2B) protein is Ribosomal RNA large subunit methyltransferase K/L.